The sequence spans 1079 residues: MAVHAPYNHAPPPTQEINGQKPTLAPAITLERPADCINRGQYPAFYIICGYLNRLRADAPHKKYELLTRIFGNWREKVGPDLYPLIRLLLPDKDRERPVYNLKESMLARCYIDILSLEKHSEAAQRLIKWKQPAGNSPNPTGDFAKVCYNEIKARSTVEEGQLSVEAVNMLLDKLAVGKMKQKDYVPILKAINMQCTAEEQEWIIRIILKDLHISIRERGVLSAFHPDAIDLYNVCSDLKRVCWTLYDPGFRLNKNETHLELFHSFLPQLCGRMNDASLENIAKAIGAPKEFIMEEKLDGERIQLHMRGNGAQWFYCSRKAKDYTYLYGAHPGEGSLTRYIATAFQDNVRNVILDGEMMVWDPVVERYLAFGTLKSAALDHFNDETAPRPCFKVFDILFLNDHCLSRKRLSERKRLLRSGKIFKNIENYKGRLEFVDEKRGKNAKDIREYLERVVETKGEGLVVKKTDVIYQTNSRGYDWIKVKPEYSDQMGENLEVLVLGGWWGKGGRSGKISRLLCGLREQAFDDGTVERPSFKTFCSIGSGMSYSDYEWILNKHKKHWRPFDRSNPPPFMKLGPVGLDDKPDVYIEPENSFVIEVKASEIVPAGGYGIGFTLRFPRCKYIYYDKNSRDYALDDESKERDMWTSMSVDDFMDLFSRPKRSYDDSQGPGKRKKRKVIRSKKNHLISNFRGQKLSDADVETSIFSDMTFFIVKGTSDYPKADLEALVHKHGADFTQAQLSDLSAIVISPDQKNPLVRAQIRHGVNVIKPEWVFESIARRTALPFLKEFLVFASEEAQDGRYYNKTLEQYDKVSFVRDRTGGALVDEDGDADVEDEIMDGEDKDEIDVEESRESKNRRMAREDLKEKESNRTLEQKKLQEAWGLRSRASPGDSDSEPEEEMSLKEESDTDSERSRGLRAIYEDEEDGENDSHESDVGVNGDDYRAVPLSGLNDKEEGLMGESPEAMHYDEDRIFYHLAFYIDTAKNAAVNGLESSSPSFDTQERLVKVEKLLIENGGRVARSISDPKLTHIIMDDEDSRRYVELTRKTAMPKRKHIVTPKWVEDCVDEETLLDEDLYKPK.

The tract at residues 1–20 is disordered; sequence MAVHAPYNHAPPPTQEINGQ. E295, K297, L298, R302, E357, F395, E460, K465, K482, and K484 together coordinate ATP. K297 acts as the N6-AMP-lysine intermediate in catalysis. E357 serves as a coordination point for Mg(2+). E460 lines the Mg(2+) pocket. One can recognise a BRCT 1 domain in the interval 699 to 789; it reads VETSIFSDMT…TALPFLKEFL (91 aa). The span at 838–847 shows a compositional bias: acidic residues; it reads DGEDKDEIDV. A disordered region spans residues 838-942; it reads DGEDKDEIDV…SDVGVNGDDY (105 aa). Composition is skewed to basic and acidic residues over residues 848-878 and 900-914; these read EESRESKNRRMAREDLKEKESNRTLEQKKLQ and MSLKEESDTDSERSR. A BRCT 2 domain is found at 968-1078; the sequence is DEDRIFYHLA…TLLDEDLYKP (111 aa).

Belongs to the ATP-dependent DNA ligase family. Requires Mg(2+) as cofactor.

The protein resides in the nucleus. It catalyses the reaction ATP + (deoxyribonucleotide)n-3'-hydroxyl + 5'-phospho-(deoxyribonucleotide)m = (deoxyribonucleotide)n+m + AMP + diphosphate.. Its function is as follows. DNA ligase involved in DNA non-homologous end joining (NHEJ); required for double-strand break (DSB) repair. This Cryptococcus neoformans var. neoformans serotype D (strain JEC21 / ATCC MYA-565) (Filobasidiella neoformans) protein is DNA ligase 4 (LIG4).